The following is a 213-amino-acid chain: Protein Syd (213 aa).

Belongs to the Syd family.

The protein resides in the cell inner membrane. Functionally, interacts with the SecY protein in vivo. May bind preferentially to an uncomplexed state of SecY, thus functioning either as a chelating agent for excess SecY in the cell or as a regulatory factor that negatively controls the translocase function. The protein is Protein Syd of Shewanella pealeana (strain ATCC 700345 / ANG-SQ1).